The primary structure comprises 60 residues: Large ribosomal subunit protein uL30 (60 aa).

It belongs to the universal ribosomal protein uL30 family. Part of the 50S ribosomal subunit.

The protein is Large ribosomal subunit protein uL30 of Xanthobacter autotrophicus (strain ATCC BAA-1158 / Py2).